Consider the following 139-residue polypeptide: uncharacterized protein (139 aa).

Transmembrane regions (helical) follow at residues 35–55 (AYFKVFSFFFFLLLTLGAAAA) and 119–139 (CCLFCCSSSYCLAGVLCVFCV).

It is found in the membrane. This is an uncharacterized protein from Saccharomyces cerevisiae (strain ATCC 204508 / S288c) (Baker's yeast).